Reading from the N-terminus, the 726-residue chain is Endo-1,4-beta-xylanase/feruloyl esterase (726 aa).

An N-terminal signal peptide occupies residues 1–19 (MKKLLVALSLIAGSLTASA). Positions 27-369 (YAAGPGLKDA…KRSLQIIRDF (343 aa)) constitute a GH10 domain. The active-site Proton donor; for xylanase activity is Glu-161. Catalysis depends on Glu-280, which acts as the Nucleophile; for xylanase activity. The feruloyl esterase stretch occupies residues 370–726 (DAAMDNRKPK…LEKMAQSLFK (357 aa)). Ser-629 functions as the Nucleophile; for esterase activity in the catalytic mechanism.

This sequence in the N-terminal section; belongs to the glycosyl hydrolase 10 (cellulase F) family. Monomer or homodimer.

It catalyses the reaction Endohydrolysis of (1-&gt;4)-beta-D-xylosidic linkages in xylans.. The enzyme catalyses feruloyl-polysaccharide + H2O = ferulate + polysaccharide.. The protein operates within glycan degradation; xylan degradation. Its function is as follows. Involved in degradation of plant cell wall polysaccharides. Has endo-xylanase activity towards substrates such as oat spelt xylan (OSX), acetylated xylo-oligosaccharides and acetylated xylan, producing primarily xylobiose; cannot hydrolyze xylobiose to xylose. Also has feruloyl esterase activity, releasing ferulic acid from methylferulate, and from the more natural substrates wheat bran, corn fiber, and XOS(FA,Ac), a corn fiber-derived substrate enriched in O-acetyl and ferulic acid esters. Exhibits negligible acetyl esterase activity on sugar acetates. Acts synergistically with Xyl3A to increase the release of xylose from xylan. Does not possess endoglucanase or mannanase activities since it is not able to hydrolyze carboxymethyl cellulose and locust bean gum. The chain is Endo-1,4-beta-xylanase/feruloyl esterase from Xylanibacter ruminicola (strain ATCC 19189 / DSM 19721 / CIP 105475 / JCM 8958 / 23) (Prevotella ruminicola).